A 417-amino-acid chain; its full sequence is Arginine biosynthesis bifunctional protein ArgJ (417 aa).

6 residues coordinate substrate: threonine 162, lysine 188, threonine 199, glutamate 289, asparagine 412, and serine 417. Threonine 199 functions as the Nucleophile in the catalytic mechanism.

Belongs to the ArgJ family. In terms of assembly, heterotetramer of two alpha and two beta chains.

It localises to the cytoplasm. The catalysed reaction is N(2)-acetyl-L-ornithine + L-glutamate = N-acetyl-L-glutamate + L-ornithine. It carries out the reaction L-glutamate + acetyl-CoA = N-acetyl-L-glutamate + CoA + H(+). Its pathway is amino-acid biosynthesis; L-arginine biosynthesis; L-ornithine and N-acetyl-L-glutamate from L-glutamate and N(2)-acetyl-L-ornithine (cyclic): step 1/1. The protein operates within amino-acid biosynthesis; L-arginine biosynthesis; N(2)-acetyl-L-ornithine from L-glutamate: step 1/4. Catalyzes two activities which are involved in the cyclic version of arginine biosynthesis: the synthesis of N-acetylglutamate from glutamate and acetyl-CoA as the acetyl donor, and of ornithine by transacetylation between N(2)-acetylornithine and glutamate. This is Arginine biosynthesis bifunctional protein ArgJ from Nitrobacter winogradskyi (strain ATCC 25391 / DSM 10237 / CIP 104748 / NCIMB 11846 / Nb-255).